The sequence spans 309 residues: Carbonic anhydrase 4 (309 aa).

Residues 1–17 form the signal peptide; that stretch reads MQLLLALLALAYVAPST. Positions 20–282 constitute an Alpha-carbonic anhydrase domain; sequence SHWCYEIQAK…LGNRQVFRSH (263 aa). Disulfide bonds link C23/C35 and C45/C226. The active-site Proton donor/acceptor is H87. Residues H114, H116, and H139 each contribute to the Zn(2+) site. An N-linked (GlcNAc...) asparagine glycan is attached at N193. 222–223 serves as a coordination point for substrate; it reads TT. A lipid anchor (GPI-anchor amidated serine) is attached at S281. Positions 282 to 309 are cleaved as a propeptide — removed in mature form; sequence HASGRLLSLPLPTLLVPTLTCLVASFLH.

Belongs to the alpha-carbonic anhydrase family. As to quaternary structure, interacts with SLC4A4. Zn(2+) serves as cofactor. The N-terminus is blocked. Post-translationally, glycosylated. As to expression, present in kidney and lung. Also particularly abundant in brain, muscle, heart and liver. Not detected in skin or spleen.

It is found in the cell membrane. It carries out the reaction hydrogencarbonate + H(+) = CO2 + H2O. Inhibited by acetazolamide. In terms of biological role, catalyzes the reversible hydration of carbon dioxide into bicarbonate and protons and thus is essential to maintaining intracellular and extracellular pH. May stimulate the sodium/bicarbonate transporter activity of SLC4A4 that acts in pH homeostasis. It is essential for acid overload removal from the retina and retina epithelium, and acid release in the choriocapillaris in the choroid. The chain is Carbonic anhydrase 4 (Ca4) from Rattus norvegicus (Rat).